A 586-amino-acid polypeptide reads, in one-letter code: Dynein axonemal assembly factor 3 (586 aa).

A disordered region spans residues 455 to 493; sequence PGGGDSAVESGPAPSKVESTRAPLPESISPPQANQAPSL.

The protein belongs to the DNAAF3 family.

The protein localises to the cytoplasm. Its subcellular location is the dynein axonemal particle. Its function is as follows. Required for the assembly of axonemal inner and outer dynein arms. Involved in preassembly of dyneins into complexes before their transport into cilia. The protein is Dynein axonemal assembly factor 3 (Dnaaf3) of Mus musculus (Mouse).